Consider the following 81-residue polypeptide: Photosystem I iron-sulfur center (81 aa).

2 4Fe-4S ferredoxin-type domains span residues 2–31 (AHTVKIYDNCIGCTQCVRACPLDVLEMVPW) and 39–68 (MASAPRTEDCVGCKRCETACPTDFLSIRVY). Residues C11, C14, C17, C21, C48, C51, C54, and C58 each coordinate [4Fe-4S] cluster.

As to quaternary structure, the eukaryotic PSI reaction center is composed of at least 11 subunits. Requires [4Fe-4S] cluster as cofactor.

The protein resides in the plastid. It localises to the chloroplast thylakoid membrane. It catalyses the reaction reduced [plastocyanin] + hnu + oxidized [2Fe-2S]-[ferredoxin] = oxidized [plastocyanin] + reduced [2Fe-2S]-[ferredoxin]. Functionally, apoprotein for the two 4Fe-4S centers FA and FB of photosystem I (PSI); essential for photochemical activity. FB is the terminal electron acceptor of PSI, donating electrons to ferredoxin. The C-terminus interacts with PsaA/B/D and helps assemble the protein into the PSI complex. Required for binding of PsaD and PsaE to PSI. PSI is a plastocyanin/cytochrome c6-ferredoxin oxidoreductase, converting photonic excitation into a charge separation, which transfers an electron from the donor P700 chlorophyll pair to the spectroscopically characterized acceptors A0, A1, FX, FA and FB in turn. In Cyanidioschyzon merolae (strain NIES-3377 / 10D) (Unicellular red alga), this protein is Photosystem I iron-sulfur center.